A 235-amino-acid polypeptide reads, in one-letter code: Elongation factor Tu (235 aa).

The 125-residue stretch at K1–E125 folds into the tr-type G domain. N47 to D50 contacts GTP.

The protein belongs to the TRAFAC class translation factor GTPase superfamily. Classic translation factor GTPase family. EF-Tu/EF-1A subfamily. As to quaternary structure, monomer.

The protein localises to the cytoplasm. It carries out the reaction GTP + H2O = GDP + phosphate + H(+). Its function is as follows. GTP hydrolase that promotes the GTP-dependent binding of aminoacyl-tRNA to the A-site of ribosomes during protein biosynthesis. This Gloeothece membranacea (strain PCC 6501 / SAG 26.84) protein is Elongation factor Tu (tufA).